We begin with the raw amino-acid sequence, 630 residues long: 1-deoxy-D-xylulose-5-phosphate synthase (630 aa).

Thiamine diphosphate-binding positions include histidine 80 and 121-123; that span reads GHS. Position 152 (aspartate 152) interacts with Mg(2+). Residues 153–154, asparagine 181, tyrosine 288, and glutamate 370 each bind thiamine diphosphate; that span reads GA. Asparagine 181 contributes to the Mg(2+) binding site.

It belongs to the transketolase family. DXPS subfamily. Homodimer. Requires Mg(2+) as cofactor. It depends on thiamine diphosphate as a cofactor.

The enzyme catalyses D-glyceraldehyde 3-phosphate + pyruvate + H(+) = 1-deoxy-D-xylulose 5-phosphate + CO2. It functions in the pathway metabolic intermediate biosynthesis; 1-deoxy-D-xylulose 5-phosphate biosynthesis; 1-deoxy-D-xylulose 5-phosphate from D-glyceraldehyde 3-phosphate and pyruvate: step 1/1. Catalyzes the acyloin condensation reaction between C atoms 2 and 3 of pyruvate and glyceraldehyde 3-phosphate to yield 1-deoxy-D-xylulose-5-phosphate (DXP). The sequence is that of 1-deoxy-D-xylulose-5-phosphate synthase from Colwellia psychrerythraea (strain 34H / ATCC BAA-681) (Vibrio psychroerythus).